A 98-amino-acid chain; its full sequence is Large ribosomal subunit protein eL21 (98 aa).

Residues 1 to 22 (MVQMSEGFRRKTRKKLSKHPRE) form a disordered region. A compositionally biased stretch (basic residues) spans 10–21 (RKTRKKLSKHPR).

The protein belongs to the eukaryotic ribosomal protein eL21 family.

The polypeptide is Large ribosomal subunit protein eL21 (rpl21e) (Methanocaldococcus jannaschii (strain ATCC 43067 / DSM 2661 / JAL-1 / JCM 10045 / NBRC 100440) (Methanococcus jannaschii)).